An 86-amino-acid chain; its full sequence is Small ribosomal subunit protein uS17 (86 aa).

Belongs to the universal ribosomal protein uS17 family. As to quaternary structure, part of the 30S ribosomal subunit.

One of the primary rRNA binding proteins, it binds specifically to the 5'-end of 16S ribosomal RNA. This Desulfotalea psychrophila (strain LSv54 / DSM 12343) protein is Small ribosomal subunit protein uS17.